Consider the following 585-residue polypeptide: tRNA-guanine(15) transglycosylase (585 aa).

The active-site Nucleophile is D95. Substrate is bound by residues D130 and A196. 3 residues coordinate Zn(2+): C279, C281, and C284. The PUA domain occupies 507–582 (VMRVVVNKEA…RAVKTRRGVE (76 aa)).

Belongs to the archaeosine tRNA-ribosyltransferase family. Zn(2+) is required as a cofactor.

It carries out the reaction guanosine(15) in tRNA + 7-cyano-7-deazaguanine = 7-cyano-7-carbaguanosine(15) in tRNA + guanine. The protein operates within tRNA modification; archaeosine-tRNA biosynthesis. In terms of biological role, exchanges the guanine residue with 7-cyano-7-deazaguanine (preQ0) at position 15 in the dihydrouridine loop (D-loop) of archaeal tRNAs. This is tRNA-guanine(15) transglycosylase from Pyrococcus furiosus (strain ATCC 43587 / DSM 3638 / JCM 8422 / Vc1).